Consider the following 465-residue polypeptide: Gamma-aminobutyric acid receptor subunit gamma-1 (465 aa).

The first 35 residues, 1-35 (MGPLKAFLFSPFLLRSQSRGVRLVFLLLTLHLGNC), serve as a signal peptide directing secretion. Residues 36-273 (VDKADDEDDE…FDLSRRMGYF (238 aa)) are Extracellular-facing. 2 N-linked (GlcNAc...) asparagine glycosylation sites follow: N50 and N127. Residues C188 and C202 are joined by a disulfide bond. N245 is a glycosylation site (N-linked (GlcNAc...) asparagine). Residues 274-294 (TIQTYIPCILTVVLSWVSFWI) form a helical membrane-spanning segment. The Cytoplasmic portion of the chain corresponds to 295-300 (NKDAVP). The chain crosses the membrane as a helical span at residues 301-320 (ARTSLGITTVLTMTTLSTIA). Over 321-328 (RKSLPKVS) the chain is Extracellular. The helical transmembrane segment at 329–349 (YVTAMDLFVSVCFIFVFAALM) threads the bilayer. Over 350–444 (EYGTLHYFTS…RIAKIDSYSR (95 aa)) the chain is Cytoplasmic. A helical membrane pass occupies residues 445–465 (IFFPTAFALFNLVYWVGYLYL).

The protein belongs to the ligand-gated ion channel (TC 1.A.9) family. Gamma-aminobutyric acid receptor (TC 1.A.9.5) subfamily. GABRG1 sub-subfamily. Heteropentamer, formed by a combination of alpha (GABRA1-6), beta (GABRB1-3), gamma (GABRG1-3), delta (GABRD), epsilon (GABRE), rho (GABRR1-3), pi (GABRP) and theta (GABRQ) chains, each subunit exhibiting distinct physiological and pharmacological properties. May be palmitoylated.

It localises to the postsynaptic cell membrane. It is found in the cell membrane. It catalyses the reaction chloride(in) = chloride(out). Its function is as follows. Gamma subunit of the heteropentameric ligand-gated chloride channel gated by gamma-aminobutyric acid (GABA), a major inhibitory neurotransmitter in the brain. GABA-gated chloride channels, also named GABA(A) receptors (GABAAR), consist of five subunits arranged around a central pore and contain GABA active binding site(s) located at the alpha and beta subunit interface(s). When activated by GABA, GABAARs selectively allow the flow of chloride anions across the cell membrane down their electrochemical gradient. Chloride influx into the postsynaptic neuron following GABAAR opening decreases the neuron ability to generate a new action potential, thereby reducing nerve transmission. The sequence is that of Gamma-aminobutyric acid receptor subunit gamma-1 from Homo sapiens (Human).